We begin with the raw amino-acid sequence, 584 residues long: Cation channel sperm-associated protein 2 (584 aa).

Residues Met1–Ser106 lie on the Cytoplasmic side of the membrane. A helical transmembrane segment spans residues Ile107 to Leu129. Residues Met130–Trp138 are Extracellular-facing. The chain crosses the membrane as a helical span at residues Pro139–Leu164. The Cytoplasmic portion of the chain corresponds to Ala165 to Asn173. A helical membrane pass occupies residues Ala174–Ser198. The Extracellular portion of the chain corresponds to Ala199–Ser201. A helical membrane pass occupies residues Val202 to Ala220. The Cytoplasmic segment spans residues Arg221–Lys237. A helical transmembrane segment spans residues Ser238 to Phe260. At Phe261 to Ser279 the chain is on the extracellular side. Residues Asp280 to Phe292 constitute an intramembrane region (helical; Pore-forming). Over Thr293–Arg312 the chain is Extracellular. Residues Val313–Val339 traverse the membrane as a helical segment. Residues Thr340–Lys584 are Cytoplasmic-facing. The segment covering Ser376–Lys386 has biased composition (polar residues). Disordered regions lie at residues Ser376–Thr460 and Ala480–Ala510. 2 stretches are compositionally biased toward acidic residues: residues Asp390–Ser418 and Glu426–Ser443. 2 stretches are compositionally biased toward basic and acidic residues: residues Asp444–Thr460 and Ala483–Ala496.

Belongs to the cation channel sperm-associated (TC 1.A.1.19) family. In terms of assembly, component of the CatSper complex or CatSpermasome composed of the core pore-forming members CATSPER1, CATSPER2, CATSPER3 and CATSPER4 as well as auxiliary members CATSPERB, CATSPERG, CATSPERD, CATSPERE, CATSPERZ, C2CD6/CATSPERT, SLCO6C1, TMEM249, TMEM262 and EFCAB9. HSPA1 may be an additional auxiliary complex member. The core complex members CATSPER1, CATSPER2, CATSPER3 and CATSPER4 form a heterotetrameric channel. The auxiliary CATSPERB, CATSPERG, CATSPERD and CATSPERE subunits form a pavilion-like structure over the pore which stabilizes the complex through interactions with CATSPER4, CATSPER3, CATSPER1 and CATSPER2 respectively. SLCO6C1 interacts with CATSPERE and TMEM262/CATSPERH interacts with CATSPERB, further stabilizing the complex. C2CD6/CATSPERT interacts at least with CATSPERD and is required for targeting the CatSper complex in the flagellar membrane. Interacts with Ca(v)3.3/CACNA1I, leading to suppression of T-type calcium channel activity.

The protein resides in the cell projection. The protein localises to the cilium. It localises to the flagellum membrane. The enzyme catalyses Ca(2+)(in) = Ca(2+)(out). Its activity is regulated as follows. Activated by intracellular alkalinization. Pore-forming subunit of the CatSper complex, a sperm-specific voltage-gated calcium channel that plays a central role in sperm cell hyperactivation. Controls calcium entry to mediate the hyperactivated motility, a step needed for sperm motility which is essential late in the preparation of sperm for fertilization. This is Cation channel sperm-associated protein 2 (Catsper2) from Rattus norvegicus (Rat).